The sequence spans 78 residues: Protein DsvD (78 aa).

The protein to A.fulgidus DsrD.

Functionally, may play an essential role in dissimilatory sulfite reduction. This chain is Protein DsvD (dsvD), found in Nitratidesulfovibrio vulgaris (strain ATCC 29579 / DSM 644 / CCUG 34227 / NCIMB 8303 / VKM B-1760 / Hildenborough) (Desulfovibrio vulgaris).